Consider the following 117-residue polypeptide: Appetite-regulating hormone (117 aa).

The signal sequence occupies residues 1-23 (MPSLGTMCSLLLFSVLWVDLAMA). Residue serine 26 is the site of O-decanoyl serine; alternate attachment. Serine 26 is lipidated: O-hexanoyl serine; alternate. The O-octanoyl serine; alternate moiety is linked to residue serine 26. The disordered stretch occupies residues 30–68 (PEHQKLQQRKESKKPPAKLQPRALEGSLGPEDTSQVEEA). Residues 31–43 (EHQKLQQRKESKK) are compositionally biased toward basic and acidic residues. A propeptide spans 52 to 75 (ALEGSLGPEDTSQVEEAEDELEIR) (removed in mature form). Leucine 98 carries the leucine amide modification. Residues 99–117 (GKFLQEVLWEDTNEALADE) constitute a propeptide, removed in mature form.

The protein belongs to the motilin family. In terms of processing, O-octanoylated by GOAT/MBOAT4. O-octanoylation is essential for ghrelin activity. Post-translationally, amidation of Leu-98 is essential for obestatin activity.

The protein localises to the secreted. Ghrelin is the ligand for growth hormone secretagogue receptor type 1 (GHSR). Induces the release of growth hormone from the pituitary. Has an appetite-stimulating effect, induces adiposity and stimulates gastric acid secretion. Involved in growth regulation. In terms of biological role, obestatin may be the ligand for GPR39. May have an appetite-reducing effect resulting in decreased food intake. May reduce gastric emptying activity and jejunal motility. The chain is Appetite-regulating hormone (GHRL) from Canis lupus familiaris (Dog).